A 254-amino-acid chain; its full sequence is tRNA pseudouridine synthase A (254 aa).

Residue D52 is the Nucleophile of the active site. Y110 is a binding site for substrate.

Belongs to the tRNA pseudouridine synthase TruA family. Homodimer.

It carries out the reaction uridine(38/39/40) in tRNA = pseudouridine(38/39/40) in tRNA. Formation of pseudouridine at positions 38, 39 and 40 in the anticodon stem and loop of transfer RNAs. The sequence is that of tRNA pseudouridine synthase A from Thermodesulfovibrio yellowstonii (strain ATCC 51303 / DSM 11347 / YP87).